Consider the following 385-residue polypeptide: Leucine aminopeptidase 1 (385 aa).

A signal peptide spans 1 to 19 (MKFPSFLSLGIAASTTALA). Residues 20 to 87 (ALPDQKPIGD…FPRAFAKTAV (68 aa)) constitute a propeptide that is removed on maturation. Asparagine 177 carries an N-linked (GlcNAc...) asparagine glycan. Zn(2+) contacts are provided by histidine 185 and aspartate 204. Asparagine 229 carries N-linked (GlcNAc...) asparagine glycosylation. Zn(2+)-binding residues include glutamate 243 and aspartate 270. Cysteine 319 and cysteine 323 form a disulfide bridge. Position 352 (histidine 352) interacts with Zn(2+).

Belongs to the peptidase M28 family. M28E subfamily. In terms of assembly, monomer. The cofactor is Zn(2+).

The protein localises to the secreted. Extracellular aminopeptidase that allows assimilation of proteinaceous substrates. The protein is Leucine aminopeptidase 1 (LAP1) of Blastomyces gilchristii (strain SLH14081) (Blastomyces dermatitidis).